The sequence spans 178 residues: Large ribosomal subunit protein uL6 (178 aa).

This sequence belongs to the universal ribosomal protein uL6 family. As to quaternary structure, part of the 50S ribosomal subunit.

This protein binds to the 23S rRNA, and is important in its secondary structure. It is located near the subunit interface in the base of the L7/L12 stalk, and near the tRNA binding site of the peptidyltransferase center. The polypeptide is Large ribosomal subunit protein uL6 (Campylobacter curvus (strain 525.92)).